An 807-amino-acid polypeptide reads, in one-letter code: Dynein axonemal intermediate chain 4 (807 aa).

2 stretches are compositionally biased toward polar residues: residues 1–11 (MHSSPTSTRKQ) and 22–31 (PRKSISFINP). Disordered stretches follow at residues 1-44 (MHSS…AASN) and 300-320 (YSSK…DSES). Residues 32–43 (SKSSAGKGYAAS) show a composition bias toward low complexity. Residues 308-317 (AKDRDPKIQD) are compositionally biased toward basic and acidic residues. 6 WD repeats span residues 493 to 533 (QSSY…NIPV), 542 to 590 (KHLG…DCHD), 617 to 657 (SRQA…QYLE), 661 to 701 (GHKG…PFLS), 704 to 743 (PTTY…LDPL), and 749 to 788 (NPGI…TASD).

Part of the multisubunit axonemal dynein complex formed at least of two heavy chains and a number of intermediate and light chains. Associated with axonemal dynein subunits such as, DNAH2, DNAI3, and DYNLT1. Interacts with DYNLT1. In terms of tissue distribution, highly expressed in tissues containing motile cilia, including the trachea, lung, oviduct, and testis.

It is found in the cytoplasm. The protein resides in the cytoskeleton. Its subcellular location is the flagellum axoneme. It localises to the cilium axoneme. The protein localises to the dynein axonemal particle. Functionally, plays a critical role in the assembly of axonemal dynein complex, thereby playing a role in ciliary motility. This Mus musculus (Mouse) protein is Dynein axonemal intermediate chain 4 (Dnai4).